Here is a 249-residue protein sequence, read N- to C-terminus: FMN reductase [NAD(P)H] (249 aa).

Residues 11-15 (HRSIR), Gln-67, 134-136 (PIG), and 173-175 (KPR) contribute to the FMN site.

It belongs to the flavin oxidoreductase frp family. Homodimer.

It carries out the reaction FMNH2 + NADP(+) = FMN + NADPH + 2 H(+). It catalyses the reaction FMNH2 + NAD(+) = FMN + NADH + 2 H(+). FMN is a competitive inhibitor of NADH, and therefore leads to the preferential utilization of NADPH. Its function is as follows. Reduces FMNH(2) to FMN, with NADH or NADPH as reductant. It also reduces nitroaromatic compounds, quinones, chromates and azo dyes. It could supply the reduced form of FMN to luciferase-like protein and contribute to the degradation of aromatic compounds. This is FMN reductase [NAD(P)H] (nfrA2) from Bacillus subtilis (strain 168).